We begin with the raw amino-acid sequence, 224 residues long: Protein HLJ1 (224 aa).

The 70-residue stretch at 18 to 87 (DKHEFYEILK…RSIYDRIGRD (70 aa)) folds into the J domain. Positions 84 to 93 (IGRDPDDRQM) are enriched in basic and acidic residues. Residues 84 to 107 (IGRDPDDRQMPSRGAASGFRGSAG) are disordered. At Ser-109 the chain carries Phosphoserine. Residues 173–192 (NRGGSPFMRQQPRSRQQQQQ) form a disordered region. Positions 181-192 (RQQPRSRQQQQQ) are enriched in low complexity.

The chain is Protein HLJ1 (HLJ1) from Saccharomyces cerevisiae (strain ATCC 204508 / S288c) (Baker's yeast).